Here is a 327-residue protein sequence, read N- to C-terminus: Mitochondrial substrate carrier family protein A (327 aa).

The tract at residues methionine 1–threonine 36 is disordered. The Mitochondrial intermembrane segment spans residues methionine 1–aspartate 48. Solcar repeat units lie at residues leucine 43 to methionine 132, isoleucine 140 to lysine 224, and proline 233 to leucine 323. The chain crosses the membrane as a helical span at residues phenylalanine 49–leucine 66. The Mitochondrial matrix portion of the chain corresponds to glutamate 67–arginine 106. Residues glycine 107–glycine 127 form a helical membrane-spanning segment. Residues alanine 128–arginine 145 are Mitochondrial intermembrane-facing. Residues methionine 146–isoleucine 166 form a helical membrane-spanning segment. Residues lysine 167–glycine 192 lie on the Mitochondrial matrix side of the membrane. A helical membrane pass occupies residues isoleucine 193–leucine 213. The Mitochondrial intermembrane segment spans residues asparagine 214–proline 238. A helical transmembrane segment spans residues serine 239–valine 259. Over lysine 260 to tyrosine 303 the chain is Mitochondrial matrix. A helical membrane pass occupies residues leucine 304–phenylalanine 324. Residues glutamate 325–lysine 327 are Mitochondrial intermembrane-facing.

Belongs to the mitochondrial carrier (TC 2.A.29) family.

Its subcellular location is the mitochondrion inner membrane. Calcium-dependent mitochondrial solute carrier. Mitochondrial solute carriers shuttle metabolites, nucleotides, and cofactors through the mitochondrial inner membrane. This is Mitochondrial substrate carrier family protein A (mcfA) from Dictyostelium discoideum (Social amoeba).